A 181-amino-acid chain; its full sequence is Urease accessory protein UreE (181 aa).

The segment at 143–181 (FDPEPGAYNQAGQGHSHGHSHGHSHNHDHEHSHGHKHAH) is disordered.

Belongs to the UreE family.

The protein resides in the cytoplasm. In terms of biological role, involved in urease metallocenter assembly. Binds nickel. Probably functions as a nickel donor during metallocenter assembly. This Marinobacter nauticus (strain ATCC 700491 / DSM 11845 / VT8) (Marinobacter aquaeolei) protein is Urease accessory protein UreE.